The sequence spans 2058 residues: E3 ubiquitin-protein ligase ubr-1 (2058 aa).

The UBR-type zinc-finger motif lies at 93–164 (QICGHVFKNG…EGYACANHEK (72 aa)). Residues 1107–1175 (VPEAAPAPEN…TPSEKSETVV (69 aa)) form a disordered region. Residues 1108-1119 (PEAAPAPENKPA) are compositionally biased toward low complexity. Composition is skewed to basic and acidic residues over residues 1123 to 1138 (EEIKAKRAARAAEMRQ) and 1153 to 1175 (KKIEDEEKKDESQTPSEKSETVV). The segment at 1217-1335 (LTCILCQEDE…GEYQCPLCKR (119 aa)) adopts an RING-type; atypical zinc-finger fold. Disordered regions lie at residues 1381–1416 (LSSESVSKKGHSRKRSHSERSLLDLEKLSKDPDTAN) and 1475–1499 (PAATPETIPAIGSSSRIPESQESGK). Over residues 1388-1397 (KKGHSRKRSH) the composition is skewed to basic residues. A compositionally biased stretch (basic and acidic residues) spans 1398–1413 (SERSLLDLEKLSKDPD). Over residues 1486 to 1495 (GSSSRIPESQ) the composition is skewed to polar residues. The chain crosses the membrane as a helical span at residues 1695 to 1715 (ILQIDILSLAISLMMTIGWTW).

The protein belongs to the E3 ubiquitin-protein ligase UBR1-like family. Interacts with ubc-1. Component of a complex containing at least ced-3, ubr-1 and possibly ate-1. Within complex interacts with ced-3 (via the p17 subunit); this interaction is required for the ced-3-mediated cleavage and subsequent degradation of the heterochronic protein lin-28. As to expression, expressed in pharyngeal muscles, body wall muscles and a subset of neurons throughout postembryonic development. Prominently expressed in premotor interneurons, but not expressed in ventral cord motor neurons. Weakly expressed in hypodermal seam cells.

Its subcellular location is the membrane. The catalysed reaction is S-ubiquitinyl-[E2 ubiquitin-conjugating enzyme]-L-cysteine + [acceptor protein]-L-lysine = [E2 ubiquitin-conjugating enzyme]-L-cysteine + N(6)-ubiquitinyl-[acceptor protein]-L-lysine.. It functions in the pathway protein modification; protein ubiquitination. E3 ubiquitin-protein ligase which is a component of the N-end rule pathway. Recognizes and binds to proteins bearing specific N-terminal residues that are destabilizing according to the N-end rule, leading to their ubiquitination and subsequent degradation. In complex with ced-3, required for the ced-3-mediated cleavage and subsequent degradation of the heterochronic protein lin-28 to regulate seam cell fate patterning during larval development. Negatively regulates glutamate metabolism through the aspartate aminotransferase got-1.2. Modulation of glutamate levels most likely controls locomotory behavior, in particular backwards locomotion or 'reversals'. The protein is E3 ubiquitin-protein ligase ubr-1 of Caenorhabditis elegans.